A 126-amino-acid polypeptide reads, in one-letter code: Aspartate 1-decarboxylase (126 aa).

S25 functions as the Schiff-base intermediate with substrate; via pyruvic acid in the catalytic mechanism. S25 carries the post-translational modification Pyruvic acid (Ser). T57 lines the substrate pocket. The active-site Proton donor is the Y58. 73 to 75 is a substrate binding site; that stretch reads GAA.

Belongs to the PanD family. In terms of assembly, heterooctamer of four alpha and four beta subunits. It depends on pyruvate as a cofactor. In terms of processing, is synthesized initially as an inactive proenzyme, which is activated by self-cleavage at a specific serine bond to produce a beta-subunit with a hydroxyl group at its C-terminus and an alpha-subunit with a pyruvoyl group at its N-terminus.

It is found in the cytoplasm. The catalysed reaction is L-aspartate + H(+) = beta-alanine + CO2. It functions in the pathway cofactor biosynthesis; (R)-pantothenate biosynthesis; beta-alanine from L-aspartate: step 1/1. Its function is as follows. Catalyzes the pyruvoyl-dependent decarboxylation of aspartate to produce beta-alanine. The protein is Aspartate 1-decarboxylase of Stutzerimonas stutzeri (strain A1501) (Pseudomonas stutzeri).